A 499-amino-acid chain; its full sequence is UDP-N-acetylmuramoyl-L-alanyl-D-glutamate--2,6-diaminopimelate ligase (499 aa).

The UDP-N-acetyl-alpha-D-muramoyl-L-alanyl-D-glutamate site is built by Leu30 and Ser32. An ATP-binding site is contributed by 122–128 (GTNGKTT). UDP-N-acetyl-alpha-D-muramoyl-L-alanyl-D-glutamate contacts are provided by residues 164-165 (TT), Ser191, Gln197, and Arg199. Lys231 bears the N6-carboxylysine mark. Residues Arg397, 421 to 424 (DNPR), Gly472, and Glu476 contribute to the meso-2,6-diaminopimelate site. Residues 421–424 (DNPR) carry the Meso-diaminopimelate recognition motif motif.

The protein belongs to the MurCDEF family. MurE subfamily. Mg(2+) serves as cofactor. Post-translationally, carboxylation is probably crucial for Mg(2+) binding and, consequently, for the gamma-phosphate positioning of ATP.

It is found in the cytoplasm. It catalyses the reaction UDP-N-acetyl-alpha-D-muramoyl-L-alanyl-D-glutamate + meso-2,6-diaminopimelate + ATP = UDP-N-acetyl-alpha-D-muramoyl-L-alanyl-gamma-D-glutamyl-meso-2,6-diaminopimelate + ADP + phosphate + H(+). The protein operates within cell wall biogenesis; peptidoglycan biosynthesis. Its function is as follows. Catalyzes the addition of meso-diaminopimelic acid to the nucleotide precursor UDP-N-acetylmuramoyl-L-alanyl-D-glutamate (UMAG) in the biosynthesis of bacterial cell-wall peptidoglycan. This chain is UDP-N-acetylmuramoyl-L-alanyl-D-glutamate--2,6-diaminopimelate ligase, found in Blochmanniella floridana.